We begin with the raw amino-acid sequence, 355 residues long: Protein RecA (355 aa).

Residue 69-76 (GPESSGKT) participates in ATP binding. The tract at residues 329-355 (AYGLPDREETKREETAQIPDTEKTKDV) is disordered.

The protein belongs to the RecA family.

The protein localises to the cytoplasm. Can catalyze the hydrolysis of ATP in the presence of single-stranded DNA, the ATP-dependent uptake of single-stranded DNA by duplex DNA, and the ATP-dependent hybridization of homologous single-stranded DNAs. It interacts with LexA causing its activation and leading to its autocatalytic cleavage. The protein is Protein RecA of Desulfotalea psychrophila (strain LSv54 / DSM 12343).